The following is a 381-amino-acid chain: Beta-lactamase CMY-2 (381 aa).

Residues 1–20 form the signal peptide; sequence MMKKSLCCALLLTASFSTFA. Catalysis depends on Ser-84, which acts as the Acyl-ester intermediate. A beta-lactam is bound by residues Ser-84, Gln-140, Tyr-170, and Asn-172.

The protein belongs to the class-C beta-lactamase family.

The catalysed reaction is a beta-lactam + H2O = a substituted beta-amino acid. Its activity is regulated as follows. Inhibited by the beta-lactamase-blocking agents sulbactam, tazobactam, avibactam and 3-aminophenylboronic acid (APB). Class C beta-lactamase which confers resistance to penicillins and cephalosporins. Has nitrocefin-, cefoxitin- and cefoperazone-hydrolyzing activities. The chain is Beta-lactamase CMY-2 from Klebsiella pneumoniae.